The sequence spans 439 residues: Serine/threonine-protein kinase 2 (439 aa).

The Protein kinase domain occupies 87-439 (NDDFYHISTG…IFSDWINGGN (353 aa)). ATP is bound by residues 93–101 (ISTGGYGIV) and lysine 117. Aspartate 307 (proton acceptor) is an active-site residue.

This sequence belongs to the protein kinase superfamily. Ser/Thr protein kinase family. Poxviruses subfamily. Phosphorylated in vivo. Autophosphorylated in vitro.

It localises to the host endoplasmic reticulum. The protein resides in the host endoplasmic reticulum-Golgi intermediate compartment. It carries out the reaction L-seryl-[protein] + ATP = O-phospho-L-seryl-[protein] + ADP + H(+). It catalyses the reaction L-threonyl-[protein] + ATP = O-phospho-L-threonyl-[protein] + ADP + H(+). In terms of biological role, essential serine-protein kinase involved in the early stage of virion morphogenesis. The chain is Serine/threonine-protein kinase 2 (OPG054) from Vaccinia virus (strain Ankara) (VACV).